The chain runs to 529 residues: MFS glucose transporter mfs1 (529 aa).

A run of 12 helical transmembrane segments spans residues 7-27 (VYFLCGFATLGGGLFGFDISS), 52-72 (SITCAMPFGSLVGALCSSFIA), 86-106 (ILWIIGSIFMCASNGIPLLVV), 109-129 (VIAGGCVGIASAMVPVYQAEI), 138-158 (VISLQQWAITWGILIQYFIQY), 179-199 (IPWGIQIVPGVILFFGMFLFP), 272-292 (LQMWSQLCGMNVMMYYIVYIM), 301-321 (LLTASIQYILNTALTLPAIIY), 330-350 (AILIGFFLQAIFLYLEGGLQG), 375-395 (AVGKAIIALSYLFVCSFATTI), 415-439 (AVSLATASNWIWNCLLALFVPPLLW), and 446-464 (YMIFAAFNTAAFIHMFLTA).

Belongs to the major facilitator superfamily. Sugar transporter (TC 2.A.1.1) family.

It is found in the membrane. Probable MFS glucose transporter; part of the gene cluster 27 that mediates the biosynthesis of asparasone A, a sclerotium-specific anthraquinone pigment important for sclerotial survival. The sequence is that of MFS glucose transporter mfs1 from Aspergillus flavus (strain ATCC 200026 / FGSC A1120 / IAM 13836 / NRRL 3357 / JCM 12722 / SRRC 167).